Reading from the N-terminus, the 257-residue chain is Microfibril-associated glycoprotein 4 (257 aa).

The signal sequence occupies residues 1 to 22 (MKALPALPLMLMLLSMPPPCAP). The short motif at 28–30 (RGD) is the Cell attachment site element. Residues 34–257 (KSCLQQPLDC…KRTEMKIRRA (224 aa)) form the Fibrinogen C-terminal domain. N-linked (GlcNAc...) asparagine glycans are attached at residues asparagine 89 and asparagine 139.

Homodimer. Can also form higher oligomers. Interacts with FBN1, FBN2 and LOX. Interacts with COL1A1 in a Ca (2+)-dependent manner. Interacts with ELN in a Ca (2+)-dependent manner; this interaction promotes ELN self-assembly.

The protein resides in the secreted. It localises to the extracellular space. It is found in the extracellular matrix. In terms of biological role, could be involved in calcium-dependent cell adhesion or intercellular interactions. May contribute to the elastic fiber assembly and/or maintenance. In Mus musculus (Mouse), this protein is Microfibril-associated glycoprotein 4 (Mfap4).